The following is a 743-amino-acid chain: Cytosolic endo-beta-N-acetylglucosaminidase (743 aa).

N-acetylmethionine is present on Met1. A compositionally biased stretch (low complexity) spans 1-11; it reads MEAAAVTVTRS. Positions 1-55 are disordered; that stretch reads MEAAAVTVTRSATRRRRRQLQGLAAPEAGTQEEQEDQEPRPRRRRPGRSIKDEEE. The residue at position 66 (Ser66) is a Phosphoserine. Positions 291-383 constitute a BRCT domain; sequence RVFFDSCDGF…DFFQNQDKFW (93 aa).

Belongs to the glycosyl hydrolase 85 family. As to expression, widely expressed. Expressed at higher level in thymus and spleen.

Its subcellular location is the cytoplasm. The protein localises to the cytosol. It catalyses the reaction an N(4)-(oligosaccharide-(1-&gt;3)-[oligosaccharide-(1-&gt;6)]-beta-D-Man-(1-&gt;4)-beta-D-GlcNAc-(1-&gt;4)-alpha-D-GlcNAc)-L-asparaginyl-[protein] + H2O = an oligosaccharide-(1-&gt;3)-[oligosaccharide-(1-&gt;6)]-beta-D-Man-(1-&gt;4)-D-GlcNAc + N(4)-(N-acetyl-beta-D-glucosaminyl)-L-asparaginyl-[protein]. Its function is as follows. Endoglycosidase that releases N-glycans from glycoproteins by cleaving the beta-1,4-glycosidic bond in the N,N'-diacetylchitobiose core. Involved in the processing of free oligosaccharides in the cytosol. This Homo sapiens (Human) protein is Cytosolic endo-beta-N-acetylglucosaminidase (ENGASE).